Consider the following 340-residue polypeptide: Dihydroorotate dehydrogenase (quinone) (340 aa).

FMN-binding positions include 63–67 (AGLDK) and Thr-87. Residue Lys-67 coordinates substrate. Substrate is bound at residue 112–116 (NRMGF). The FMN site is built by Asn-140 and Asn-173. Residue Asn-173 coordinates substrate. The active-site Nucleophile is Ser-176. Asn-178 contacts substrate. Residues Lys-218 and Thr-246 each contribute to the FMN site. Position 247 to 248 (247 to 248 (NT)) interacts with substrate. FMN contacts are provided by residues Gly-269, Gly-298, and 319-320 (YT).

It belongs to the dihydroorotate dehydrogenase family. Type 2 subfamily. In terms of assembly, monomer. Requires FMN as cofactor.

The protein localises to the cell membrane. It catalyses the reaction (S)-dihydroorotate + a quinone = orotate + a quinol. It functions in the pathway pyrimidine metabolism; UMP biosynthesis via de novo pathway; orotate from (S)-dihydroorotate (quinone route): step 1/1. Its function is as follows. Catalyzes the conversion of dihydroorotate to orotate with quinone as electron acceptor. The polypeptide is Dihydroorotate dehydrogenase (quinone) (Methylococcus capsulatus (strain ATCC 33009 / NCIMB 11132 / Bath)).